A 96-amino-acid chain; its full sequence is Co-chaperonin GroES (96 aa).

The protein belongs to the GroES chaperonin family. As to quaternary structure, heptamer of 7 subunits arranged in a ring. Interacts with the chaperonin GroEL.

It localises to the cytoplasm. In terms of biological role, together with the chaperonin GroEL, plays an essential role in assisting protein folding. The GroEL-GroES system forms a nano-cage that allows encapsulation of the non-native substrate proteins and provides a physical environment optimized to promote and accelerate protein folding. GroES binds to the apical surface of the GroEL ring, thereby capping the opening of the GroEL channel. This is Co-chaperonin GroES from Paraburkholderia phytofirmans (strain DSM 17436 / LMG 22146 / PsJN) (Burkholderia phytofirmans).